The following is a 375-amino-acid chain: Methylthioribose-1-phosphate isomerase (375 aa).

The active-site Proton donor is the Asp-257.

This sequence belongs to the eIF-2B alpha/beta/delta subunits family. MtnA subfamily.

It is found in the cytoplasm. The protein resides in the nucleus. The enzyme catalyses 5-(methylsulfanyl)-alpha-D-ribose 1-phosphate = 5-(methylsulfanyl)-D-ribulose 1-phosphate. The protein operates within amino-acid biosynthesis; L-methionine biosynthesis via salvage pathway; L-methionine from S-methyl-5-thio-alpha-D-ribose 1-phosphate: step 1/6. Its function is as follows. Catalyzes the interconversion of methylthioribose-1-phosphate (MTR-1-P) into methylthioribulose-1-phosphate (MTRu-1-P). The polypeptide is Methylthioribose-1-phosphate isomerase (Leishmania infantum).